The primary structure comprises 540 residues: Serine/threonine-protein phosphatase ppzA (540 aa).

2 disordered regions span residues 1 to 108 (MGQS…KRGH) and 120 to 140 (VDHV…STQK). Polar residues-rich tracts occupy residues 15 to 24 (SLQSYPSFSR) and 45 to 54 (SDSPRGSTAG). Positions 62 to 88 (AASVKSTTSRRSSTNQSVQSPDDTPSQ) are enriched in low complexity. A compositionally biased stretch (pro residues) spans 89–98 (PDAPEPPPSP). Residues 127 to 136 (PPTGAAPTGP) are compositionally biased toward low complexity. Positions 239, 241, 267, and 299 each coordinate Mn(2+). The Phosphatase tensin-type domain occupies 258–540 (PASNYLFLGD…SLVTSWGISR (283 aa)). The active-site Proton donor is H300. Mn(2+) contacts are provided by H348 and H423.

The protein belongs to the PPP phosphatase family. PP-Z subfamily. In terms of assembly, interacts with at least 54 proteins, of which 31 are detected only after iron starvation and 22 are detected only in control conditions. Only the regulatory subunit of the protein phosphatase PP1 (Afu1g04800/AFUB_005140) interacts with ppzA in both conditions. It depends on Mn(2+) as a cofactor.

The protein resides in the cytoplasm. The enzyme catalyses O-phospho-L-seryl-[protein] + H2O = L-seryl-[protein] + phosphate. It carries out the reaction O-phospho-L-threonyl-[protein] + H2O = L-threonyl-[protein] + phosphate. Catalytic subunit of protein phosphatase Z (PPZ) involved in iron assimilation. Regulates secondary metabolites production, including gliotoxin, pyripyropene A, fumagillin, fumiquinazoline A, triacetyl-fusarinine C, and helvolic acid. Plays a key role in pathogenicity. The sequence is that of Serine/threonine-protein phosphatase ppzA from Aspergillus fumigatus (strain CBS 144.89 / FGSC A1163 / CEA10) (Neosartorya fumigata).